Reading from the N-terminus, the 285-residue chain is Urease accessory protein UreD (285 aa).

It belongs to the UreD family. UreD, UreF and UreG form a complex that acts as a GTP-hydrolysis-dependent molecular chaperone, activating the urease apoprotein by helping to assemble the nickel containing metallocenter of UreC. The UreE protein probably delivers the nickel.

It is found in the cytoplasm. Required for maturation of urease via the functional incorporation of the urease nickel metallocenter. This chain is Urease accessory protein UreD, found in Citrobacter koseri (strain ATCC BAA-895 / CDC 4225-83 / SGSC4696).